The following is a 263-amino-acid chain: 4-hydroxy-2-oxo-heptane-1,7-dioate aldolase (263 aa).

The Proton acceptor role is filled by His45. Substrate is bound at residue Gln147. An a divalent metal cation-binding site is contributed by Glu149. Substrate-binding residues include Ala174 and Asp175. Asp175 lines the a divalent metal cation pocket.

It belongs to the HpcH/HpaI aldolase family. Homohexamer; trimer of dimers. Requires a divalent metal cation as cofactor.

It carries out the reaction 4-hydroxy-2-oxoheptanedioate = succinate semialdehyde + pyruvate. It participates in aromatic compound metabolism; 4-hydroxyphenylacetate degradation; pyruvate and succinate semialdehyde from 4-hydroxyphenylacetate: step 7/7. In terms of biological role, catalyzes the reversible retro-aldol cleavage of 4-hydroxy-2-ketoheptane-1,7-dioate (HKHD) to pyruvate and succinic semialdehyde. This Salmonella heidelberg (strain SL476) protein is 4-hydroxy-2-oxo-heptane-1,7-dioate aldolase.